The following is a 259-amino-acid chain: Global transcriptional regulator CodY (259 aa).

The segment at 1–155 (MTLLEKTRKI…GGTVVGMEIL (155 aa)) is GAF domain. Positions 203–222 (ASKIADRVGITRSVIVNALR) form a DNA-binding region, H-T-H motif.

This sequence belongs to the CodY family.

It localises to the cytoplasm. In terms of biological role, DNA-binding global transcriptional regulator which is involved in the adaptive response to starvation and acts by directly or indirectly controlling the expression of numerous genes in response to nutrient availability. During rapid exponential growth, CodY is highly active and represses genes whose products allow adaptation to nutrient depletion. The protein is Global transcriptional regulator CodY of Listeria monocytogenes serotype 4b (strain CLIP80459).